The following is a 193-amino-acid chain: tRNA (cytidine(56)-2'-O)-methyltransferase (193 aa).

S-adenosyl-L-methionine contacts are provided by residues leucine 86 and 115–119; that span reads GGEKV.

It belongs to the aTrm56 family. In terms of assembly, homodimer.

It is found in the cytoplasm. It carries out the reaction cytidine(56) in tRNA + S-adenosyl-L-methionine = 2'-O-methylcytidine(56) in tRNA + S-adenosyl-L-homocysteine + H(+). Specifically catalyzes the AdoMet-dependent 2'-O-ribose methylation of cytidine at position 56 in tRNAs. This chain is tRNA (cytidine(56)-2'-O)-methyltransferase, found in Haloquadratum walsbyi (strain DSM 16790 / HBSQ001).